We begin with the raw amino-acid sequence, 815 residues long: Heme-copper oxidase subunit I+III (815 aa).

A COX1 region spans residues 1–467 (MVSRLRGFLA…QLSTLGAFIF (467 aa)). A helical membrane pass occupies residues 26-46 (LLYLVTSIAFLLIAGSLALLF). His70 contacts Fe(II)-heme a. A run of 18 helical transmembrane segments spans residues 71–91 (GLIMLLWFASPFAFGLANYIV), 105–125 (LNALSYWLYLLSGLVLLASFF), 157–177 (LAIFLFSLSVTLGTINFLVTI), 197–217 (ILFTVILMLWAFPPLMVGGAL), 242–262 (LFWFFGHPEVYILLFPALGAM), 281–301 (LTAFLIATIISFVVWMHHMFI), 314–334 (ITTILISIPFEMAVMSFIFTL), 339–359 (LVYTVPMLFAVGALLNFIIGG), 380–400 (VVAHFHYILVGTVTLGLIAGL), 419–439 (IHFALAMLGVALTFLPQFALM), 463–483 (GAFIFGGSMAIGLVNFLYSLV), 580–600 (ALFGLFVSKPLSYLGAIVFLL), 637–657 (WVFIASEVATFGSIFSAYFFI), 683–703 (LINTIILFTGTMLFTLAYLGV), 708–728 (YLITLSGLLGTLFMAIYFLTV), 736–756 (LLIAGLGLDAGMYMQAYYVTT), 758–778 (AHALHVILGVLATTYLLVKLF), and 791–811 (VLAVGIYWGIVEIVWTLVFPL). Cu cation-binding residues include His248, Tyr252, His297, and His298. A cross-link (1'-histidyl-3'-tyrosine (His-Tyr)) is located at residues 248–252 (HPEVY). A heme a3-binding site is contributed by His383. His385 provides a ligand contact to Fe(II)-heme a. Residues 545–815 (DVSNVPLSGG…TLVFPLYYLV (271 aa)) are COX3.

In the N-terminal section; belongs to the heme-copper respiratory oxidase family. It in the C-terminal section; belongs to the cytochrome c oxidase subunit 3 family. It depends on heme as a cofactor. Cu cation is required as a cofactor.

It is found in the cell membrane. The protein is Heme-copper oxidase subunit I+III (aoxB) of Aeropyrum pernix (strain ATCC 700893 / DSM 11879 / JCM 9820 / NBRC 100138 / K1).